The following is a 279-amino-acid chain: Acyl-[acyl-carrier-protein]--UDP-N-acetylglucosamine O-acyltransferase (279 aa).

The interval 256 to 279 is disordered; sequence IERGADKDALQDESVEKEGALVES.

The protein belongs to the transferase hexapeptide repeat family. LpxA subfamily. Homotrimer.

The protein resides in the cytoplasm. The catalysed reaction is a (3R)-hydroxyacyl-[ACP] + UDP-N-acetyl-alpha-D-glucosamine = a UDP-3-O-[(3R)-3-hydroxyacyl]-N-acetyl-alpha-D-glucosamine + holo-[ACP]. It functions in the pathway glycolipid biosynthesis; lipid IV(A) biosynthesis; lipid IV(A) from (3R)-3-hydroxytetradecanoyl-[acyl-carrier-protein] and UDP-N-acetyl-alpha-D-glucosamine: step 1/6. Its function is as follows. Involved in the biosynthesis of lipid A, a phosphorylated glycolipid that anchors the lipopolysaccharide to the outer membrane of the cell. The chain is Acyl-[acyl-carrier-protein]--UDP-N-acetylglucosamine O-acyltransferase from Chlamydia caviae (strain ATCC VR-813 / DSM 19441 / 03DC25 / GPIC) (Chlamydophila caviae).